The following is a 277-amino-acid chain: Shikimate dehydrogenase (NADP(+)) (277 aa).

Residues 15–17 (SLS) and Thr62 each bind shikimate. Lys66 serves as the catalytic Proton acceptor. Asn87 and Asp102 together coordinate shikimate. Residues 127 to 131 (GAGGA), 151 to 156 (NRTVDK), and Ile219 contribute to the NADP(+) site. Tyr221 serves as a coordination point for shikimate. Residue Gly242 participates in NADP(+) binding.

It belongs to the shikimate dehydrogenase family. As to quaternary structure, homodimer.

It catalyses the reaction shikimate + NADP(+) = 3-dehydroshikimate + NADPH + H(+). It functions in the pathway metabolic intermediate biosynthesis; chorismate biosynthesis; chorismate from D-erythrose 4-phosphate and phosphoenolpyruvate: step 4/7. Functionally, involved in the biosynthesis of the chorismate, which leads to the biosynthesis of aromatic amino acids. Catalyzes the reversible NADPH linked reduction of 3-dehydroshikimate (DHSA) to yield shikimate (SA). This is Shikimate dehydrogenase (NADP(+)) from Bacillus cereus (strain G9842).